A 359-amino-acid polypeptide reads, in one-letter code: SAGA complex subunit Spt7 (359 aa).

As to quaternary structure, component of the Spt-Ada-Gcn5 acetyltransferase (SAGA) complex consisting of wda/Taf5L, Saf6, Taf9, Taf10b, Taf12, Ada1, Spt3, Spt7, Spt20, Sf3b3, Sf3b5, Nipped-A/Tra1, a histone acetyltransferase (HAT) module made up of Gcn5, Ada2b (Isoform B), Ada3 and Sgf29, and a deubiquitinase (DUB) module made up of not/nonstop, Sgf11 and e(y)2 tethered to SAGA by Atxn7. Interacts with Ada2b; the interaction is direct.

The protein resides in the nucleus. In terms of biological role, component of the transcription regulatory complex SAGA, a multiprotein complex that activates transcription by remodeling chromatin and mediating histone acetylation and deubiquitination. The SAGA complex predominantly acetylates histone H3. This is SAGA complex subunit Spt7 from Drosophila melanogaster (Fruit fly).